Reading from the N-terminus, the 174-residue chain is Ribosome maturation factor RimM (174 aa).

The region spanning 98 to 171 (EGEFYFHQII…TIHIEVMEGL (74 aa)) is the PRC barrel domain.

It belongs to the RimM family. In terms of assembly, binds ribosomal protein uS19.

It is found in the cytoplasm. In terms of biological role, an accessory protein needed during the final step in the assembly of 30S ribosomal subunit, possibly for assembly of the head region. Essential for efficient processing of 16S rRNA. May be needed both before and after RbfA during the maturation of 16S rRNA. It has affinity for free ribosomal 30S subunits but not for 70S ribosomes. This chain is Ribosome maturation factor RimM, found in Bacillus pumilus (strain SAFR-032).